The chain runs to 399 residues: MEKHLIALSVAALQAGAAPASADIKMGSLYPFSGPLALLGDESARGLEIAVEEINAKGGVQGEKIVLVRGDAVDNNQAIGEARRLISVENVAGIFGSFSSGRAVAASQVSELAGVPYFELGAVADEITDRGLENVYRANPYARDFAQMIVEMLQKKIAPKLGRDSKDLKIAVIYEDSSYGTSVAKHEETFLKEAGLNMVLSQSYPGNTVDMSSLVLDLKSAGADVVLQTSYQSDSVLFLQQANEGGYKPSAIVGAGGGYSLQPTADAVGHDVIEAAYDVDFTQFAVNTSFTPGLEEFVEAYKKKYGETPRSGYSLTNYVGAKVILEALNKVKGFDAAAVKQALSAVDIEAGKTAMGYGFKFDQNNQNERASMMGMQWQDGKLVTVYPDAAAISEIRLPQ.

A signal peptide spans 1–22 (MEKHLIALSVAALQAGAAPASA).

This sequence belongs to the leucine-binding protein family.

Its function is as follows. Component of an amino-acid transport system. The sequence is that of Leu/Ile/Val-binding protein homolog 7 from Brucella abortus (strain 2308).